The following is a 1002-amino-acid chain: Protein SMAX1-LIKE 7 (1002 aa).

In terms of domain architecture, Clp R spans 8–185; sequence ARQCLTEETA…DVLHPPVTSQ (178 aa). 2 repeat regions span residues 12 to 86 and 103 to 185; these read LTEE…LDRL and VSNS…VTSQ. The short motif at 854–858 is the EAR element; the sequence is LDLNL.

The protein belongs to the ClpA/ClpB family. As to quaternary structure, interacts with TPL/TPR in an EAR-motif dependent manner. Interacts with TPL, TPR1, TPR2 and TPR4. Interacts with MAX2 and TPR2. Interacts with D14. The interaction with D14 occurs in the presence of (2'R) stereoisomers of strigolactones, but not (2'S) stereoisomers. Ubiquitinated upon strigolactone treatment. Strigolactone, but not karrikin, triggers rapid SCF(MAX2)-dependent degradation. As to expression, expressed in axillary branches and roots. Detected in seedlings and leaves. Expressed in the primary rosette buds and expanding leaves of adult rosettes, the vasculature of the hypocotyls, cotyledons, and mature roots, and in the midvein and petioles of young leaves.

It localises to the nucleus. Probable component of a transcriptional corepressor complex involved in branching control. Regulates cotyledon expansion and lateral root growth, but not germination or hypocotyl elongation. Promotes auxin transport and PIN1 accumulation in the stem and represses BRC1/TCP18 expression in axillary buds. The polypeptide is Protein SMAX1-LIKE 7 (Arabidopsis thaliana (Mouse-ear cress)).